The primary structure comprises 370 residues: Protein phosphatase 2C homolog 2 (370 aa).

The region spanning 23 to 291 (HFGVSHMQGW…DNMTICIVAF (269 aa)) is the PPM-type phosphatase domain. Mn(2+) is bound by residues aspartate 63, glycine 64, aspartate 233, and aspartate 282. Serine 355 and serine 357 each carry phosphoserine.

It belongs to the PP2C family. As to quaternary structure, monomer. The cofactor is Mg(2+). Requires Mn(2+) as cofactor.

The protein resides in the nucleus. The protein localises to the cytoplasm. It is found in the cytosol. The catalysed reaction is O-phospho-L-seryl-[protein] + H2O = L-seryl-[protein] + phosphate. It carries out the reaction O-phospho-L-threonyl-[protein] + H2O = L-threonyl-[protein] + phosphate. With respect to regulation, activity is reduced when phosphosrylated at Ser-355/Ser-357. In terms of biological role, dephosphorylating regulator for many key proteins. Has an important role in osmotic stability and cell shape control. It may negatively regulate the osmosensing signal transmitted through wis1 map kinase. In Schizosaccharomyces pombe (strain 972 / ATCC 24843) (Fission yeast), this protein is Protein phosphatase 2C homolog 2 (ptc2).